We begin with the raw amino-acid sequence, 311 residues long: MEPREAGQHAGAADGAQEDVAFNLVILSLTEGLGLGGLLGNGAVLWLLSSNVYRNPFAIYLLDVACADLIFLGCHMVAIIPDLLQGRLDFPGFVQTSLATLRFFCYIVGLSLLVAVSVEQCLAALFPAWYSCRRPRHLTTCVCALTWACCLLLHLLLSGACTQFFGEPSRHLCRTLWLVAAVLLAVLCCTMCGASLMLLLQVERGPQRPPPRGFPTLILLAVLLFLFCGLPFGIYWLSRNLLWHIPHYFYHFSFLTAAVYCAAKPVVYFCLGSAQGRRLPLRLVLQRALGDEAELGAVRETSRRGLVDIAA.

Topologically, residues 1–25 are extracellular; the sequence is MEPREAGQHAGAADGAQEDVAFNLV. A helical membrane pass occupies residues 26–46; sequence ILSLTEGLGLGGLLGNGAVLW. Residues 47-63 are Cytoplasmic-facing; sequence LLSSNVYRNPFAIYLLD. The chain crosses the membrane as a helical span at residues 64–84; the sequence is VACADLIFLGCHMVAIIPDLL. The Extracellular portion of the chain corresponds to 85 to 95; that stretch reads QGRLDFPGFVQ. A helical membrane pass occupies residues 96–116; the sequence is TSLATLRFFCYIVGLSLLVAV. At 117 to 136 the chain is on the cytoplasmic side; the sequence is SVEQCLAALFPAWYSCRRPR. A helical transmembrane segment spans residues 137-157; sequence HLTTCVCALTWACCLLLHLLL. The Extracellular segment spans residues 158–177; the sequence is SGACTQFFGEPSRHLCRTLW. A helical membrane pass occupies residues 178–198; the sequence is LVAAVLLAVLCCTMCGASLML. The Cytoplasmic segment spans residues 199-216; the sequence is LLQVERGPQRPPPRGFPT. The helical transmembrane segment at 217–237 threads the bilayer; sequence LILLAVLLFLFCGLPFGIYWL. Residues 238–251 are Extracellular-facing; sequence SRNLLWHIPHYFYH. The chain crosses the membrane as a helical span at residues 252-272; the sequence is FSFLTAAVYCAAKPVVYFCLG. The Cytoplasmic segment spans residues 273–311; sequence SAQGRRLPLRLVLQRALGDEAELGAVRETSRRGLVDIAA.

Belongs to the G-protein coupled receptor 1 family. Mas subfamily.

It is found in the cell membrane. Its function is as follows. Orphan receptor. May regulate nociceptor function and/or development, including the sensation or modulation of pain. This Macaca fascicularis (Crab-eating macaque) protein is Mas-related G-protein coupled receptor member E (MRGPRE).